The following is a 203-amino-acid chain: MLTEQQRRELDWEKTDGLMPVIVQHAVSGEVLMLGYMNPEALDRTIESGKVTFFSRTKQRLWTKGETSGNFLNVVSIAPDCDNDTLLVLANPIGPTCHKGTSSCFGDTAHQWLFLYQLEQLLAERKSADPETSYTAKLYASGSKRIAQKVGEEGVETALAATVHDRFELTNEASDLMYHLLVLLQDQDLDLTTVIENLRKRHQ.

Residues 1–114 (MLTEQQRREL…FGDTAHQWLF (114 aa)) form a phosphoribosyl-AMP cyclohydrolase region. The phosphoribosyl-ATP pyrophosphohydrolase stretch occupies residues 115-203 (LYQLEQLLAE…VIENLRKRHQ (89 aa)).

This sequence in the N-terminal section; belongs to the PRA-CH family. It in the C-terminal section; belongs to the PRA-PH family.

Its subcellular location is the cytoplasm. The catalysed reaction is 1-(5-phospho-beta-D-ribosyl)-ATP + H2O = 1-(5-phospho-beta-D-ribosyl)-5'-AMP + diphosphate + H(+). The enzyme catalyses 1-(5-phospho-beta-D-ribosyl)-5'-AMP + H2O = 1-(5-phospho-beta-D-ribosyl)-5-[(5-phospho-beta-D-ribosylamino)methylideneamino]imidazole-4-carboxamide. It functions in the pathway amino-acid biosynthesis; L-histidine biosynthesis; L-histidine from 5-phospho-alpha-D-ribose 1-diphosphate: step 2/9. The protein operates within amino-acid biosynthesis; L-histidine biosynthesis; L-histidine from 5-phospho-alpha-D-ribose 1-diphosphate: step 3/9. This is Histidine biosynthesis bifunctional protein HisIE from Escherichia coli O6:H1 (strain CFT073 / ATCC 700928 / UPEC).